A 366-amino-acid chain; its full sequence is Variable large protein 10 (366 aa).

The first 18 residues, 1-18 (MRKRISAIIMTLFMVLAS), serve as a signal peptide directing secretion. Cys-19 is lipidated: N-palmitoyl cysteine. Cys-19 is lipidated: S-diacylglycerol cysteine.

The protein belongs to the variable large protein (Vlp) family. Beta subfamily.

The protein localises to the cell outer membrane. The Vlp and Vsp proteins are antigenically distinct proteins, only one vlp or vsp gene is transcriptionally active at any one time. Switching between these genes is a mechanism of host immune response evasion. This Borrelia hermsii protein is Variable large protein 10.